A 57-amino-acid polypeptide reads, in one-letter code: Sec-independent protein translocase protein TatAy (57 aa).

The helical transmembrane segment at 1–21 (MPIGPGSLAVIAIVALIIFGP) threads the bilayer.

Belongs to the TatA/E family. Forms a complex with TatCy. Two types of complexes exist: one composed of TatAy and TatCy, and another composed only of TatAy. Cytosolic TatA forms large complexes or aggregates.

Its subcellular location is the cell membrane. The protein resides in the cytoplasm. It is found in the cytosol. Part of the twin-arginine translocation (Tat) system that transports large folded proteins containing a characteristic twin-arginine motif in their signal peptide across membranes. TatA could form the protein-conducting channel of the Tat system. Required for YwbN secretion. The chain is Sec-independent protein translocase protein TatAy from Bacillus subtilis (strain 168).